The sequence spans 170 residues: mRNA 3'-end-processing protein yth1 (170 aa).

4 C3H1-type zinc fingers span residues 48–75 (KMGSVVCKHWLRGLCKKGEQCDFLHEYN), 76–104 (LKKMPPCHFYAERGWCSNGEECLYLHLDP), 105–130 (SKQVGVCAWYNMGFCPLGPICRGKHV), and 131–157 (RKPRPCPKYLAGFCPLGPNCPDAHPKH).

It belongs to the CPSF4/YTH1 family.

Its subcellular location is the nucleus. Component of the cleavage factor I (CF I) involved in pre-mRNA 3'-end processing. This Schizosaccharomyces pombe (strain 972 / ATCC 24843) (Fission yeast) protein is mRNA 3'-end-processing protein yth1 (yth1).